The following is a 792-amino-acid chain: Glucocorticoid receptor (792 aa).

Positions 1 to 15 (MDSKESLAPPGRDEV) are enriched in basic and acidic residues. Residues 1 to 25 (MDSKESLAPPGRDEVPSSLLGRGRG) form a disordered region. A modulating region spans residues 1 to 436 (MDSKESLAPP…STATGPPPKL (436 aa)). The residue at position 24 (Arg24) is an Omega-N-methylarginine. A Phosphoserine modification is found at Ser46. Residues 67 to 98 (SKGSASNAQQQQQQQQQQQQQQQQQPQPDLSK) form a disordered region. The span at 75–94 (QQQQQQQQQQQQQQQQQPQP) shows a compositional bias: low complexity. Phosphoserine occurs at positions 131, 152, and 159. Positions 148-162 (NRSTSRPENPKSSTP) are enriched in polar residues. A disordered region spans residues 148–201 (NRSTSRPENPKSSTPAAGCATPTEKEFPQTHSDPSSEQQNRKSQPGTNGGSVKL). Position 168 is a phosphothreonine (Thr168). Residues 176-193 (QTHSDPSSEQQNRKSQPG) are compositionally biased toward polar residues. A phosphoserine mark is found at Ser221, Ser229, Ser243, and Ser284. Glycyl lysine isopeptide (Lys-Gly) (interchain with G-Cter in SUMO); alternate cross-links involve residues Lys294 and Lys310. Residues Lys294 and Lys310 each participate in a glycyl lysine isopeptide (Lys-Gly) (interchain with G-Cter in SUMO2); alternate cross-link. Phosphoserine is present on residues Ser324 and Ser421. Positions 434 to 509 (PKLCLVCSDE…AGMNLEARKT (76 aa)) form a DNA-binding region, nuclear receptor. Lys435 participates in a covalent cross-link: Glycyl lysine isopeptide (Lys-Gly) (interchain with G-Cter in ubiquitin). NR C4-type zinc fingers lie at residues 437–457 (CLVCSDEASGCHYGVLTCGSC) and 473–497 (CAGRNDCIIDKIRRKNCPACRYRKC). Residues Lys496, Lys508, Lys510, and Lys511 each carry the N6-acetyllysine modification. The interval 501 to 792 (GMNLEARKTK…NIKKLLFHQK (292 aa)) is interaction with CLOCK. Positions 503–538 (NLEARKTKKKIKGIQQATAGVSQDTSENANKTIVPA) are hinge. The NR LBD domain occupies 539–773 (ALPQLTPTLV…FPEMLAEIIT (235 aa)). The interval 547-712 (LVSLLEVIEP…EIRMTYIKEL (166 aa)) is interaction with CRY1. Residue Lys718 forms a Glycyl lysine isopeptide (Lys-Gly) (interchain with G-Cter in SUMO) linkage.

It belongs to the nuclear hormone receptor family. NR3 subfamily. In terms of assembly, heteromultimeric cytoplasmic complex with HSP90AA1, HSPA1A/HSPA1B, and FKBP5 or another immunophilin such as PPID, STIP1, or the immunophilin homolog PPP5C. Upon ligand binding FKBP5 dissociates from the complex and FKBP4 takes its place, thereby linking the complex to dynein and mediating transport to the nucleus, where the complex dissociates. Probably forms a complex composed of chaperones HSP90 and HSP70, co-chaperones CDC37, PPP5C, TSC1 and client protein TSC2, CDK4, AKT, RAF1 and NR3C1; this complex does not contain co-chaperones STIP1/HOP and PTGES3/p23. Directly interacts with UNC45A. Binds to DNA as a homodimer, and as heterodimer with NR3C2 or the retinoid X receptor. Binds STAT5A and STAT5B homodimers and heterodimers. Interacts with NRIP1, POU2F1, POU2F2 and TRIM28. Interacts with several coactivator complexes, including the SMARCA4 complex, CREBBP/EP300, TADA2L (Ada complex) and p160 coactivators such as NCOA2 and NCOA6. Interaction with BAG1 inhibits transactivation. Interacts with HEXIM1 and TGFB1I1. Interacts with NCOA1. Interacts with NCOA3, SMARCA4, SMARCC1, SMARCD1, and SMARCE1. Interacts with CLOCK, CRY1 and CRY2 in a ligand-dependent fashion. Interacts with CIART. Interacts with RWDD3. Interacts with UBE2I/UBC9 and this interaction is enhanced in the presence of RWDD3. Interacts with GRIP1. Interacts with NR4A3 (via nuclear receptor DNA-binding domain), represses transcription activity of NR4A3 on the POMC promoter Nur response element (NurRE). Directly interacts with PNRC2 to attract and form a complex with UPF1 and DCP1A; the interaction leads to rapid mRNA degradation. Interacts with GSK3B. Interacts with FNIP1 and FNIP2. Interacts (via C-terminus) with HNRNPU (via C-terminus). Interacts with MCM3AP. Interacts (via domain NR LBD) with HSP90AA1 and HSP90AB1. In the absence of hormonal ligand, interacts with TACC1. Interacts (via NR LBD domain) with ZNF764 (via KRAB domain); the interaction regulates transcription factor activity of NR3C1 by directing its actions toward certain biologic pathways. In terms of processing, acetylation by CLOCK reduces its binding to glucocorticoid response elements and its transcriptional activity. Post-translationally, increased proteasome-mediated degradation in response to glucocorticoids. Phosphorylated in the absence of hormone; becomes hyperphosphorylated in the presence of glucocorticoids. Phosphorylated in the absence of hormone; becomes hyperphosphorylated in the presence of glucocorticoid. The Ser-221, Ser-243 and Ser-421-phosphorylated forms are mainly cytoplasmic, and the Ser-229-phosphorylated form is nuclear. Phosphorylation at Ser-229 increases transcriptional activity. Phosphorylation at Ser-221, Ser-243 and Ser-421 decreases signaling capacity. Phosphorylation at Ser-421 may protect from glucocorticoid-induced apoptosis. Phosphorylation at Ser-221 and Ser-229 is not required in regulation of chromosome segregation. May be dephosphorylated by PPP5C, attenuates NR3C1 action. In terms of processing, sumoylation at Lys-294 and Lys-310 negatively regulates its transcriptional activity. Sumoylation at Lys-718 positively regulates its transcriptional activity in the presence of RWDD3. Sumoylation at Lys-294 and Lys-310 is dispensable whereas sumoylation at Lys-718 is critical for the stimulatory effect of RWDD3 on its transcriptional activity. Heat shock increases sumoylation in a RWDD3-dependent manner. Post-translationally, ubiquitinated. Ubiquitination by UBR5 leads to its degradation: UBR5 specifically recognizes and binds ligand-bound NR3C1 when it is not associated with coactivators (NCOAs). In presence of NCOAs, the UBR5-degron is not accessible, preventing its ubiquitination and degradation. As to expression, expressed in spleen, kidney and liver. Expressed in a circadian manner in the liver. In terms of tissue distribution, expressed at highest level in spleen with lesser amounts in kidney and liver.

The protein localises to the cytoplasm. Its subcellular location is the nucleus. The protein resides in the mitochondrion. It localises to the cytoskeleton. It is found in the spindle. The protein localises to the microtubule organizing center. Its subcellular location is the centrosome. The protein resides in the chromosome. It localises to the nucleoplasm. In terms of biological role, receptor for glucocorticoids (GC). Has a dual mode of action: as a transcription factor that binds to glucocorticoid response elements (GRE), both for nuclear and mitochondrial DNA, and as a modulator of other transcription factors. Affects inflammatory responses, cellular proliferation and differentiation in target tissues. Involved in chromatin remodeling. Plays a role in rapid mRNA degradation by binding to the 5' UTR of target mRNAs and interacting with PNRC2 in a ligand-dependent manner which recruits the RNA helicase UPF1 and the mRNA-decapping enzyme DCP1A, leading to RNA decay. Could act as a coactivator for STAT5-dependent transcription upon growth hormone (GH) stimulation and could reveal an essential role of hepatic GR in the control of body growth. Its function is as follows. Has transcriptional activation and repression activity. Mediates glucocorticoid-induced apoptosis. Promotes accurate chromosome segregation during mitosis. May act as a tumor suppressor. May play a negative role in adipogenesis through the regulation of lipolytic and antilipogenic gene expression. Functionally, acts as a dominant negative inhibitor of isoform 1. Has intrinsic transcriptional activity independent of isoform Alpha when both isoforms are coexpressed. Loses this transcription modulator function on its own. Has no hormone-binding activity. May play a role in controlling glucose metabolism by maintaining insulin sensitivity. Reduces hepatic gluconeogenesis through down-regulation of PEPCK in an isoform Alpha-dependent manner. Directly regulates STAT1 expression in isoform Alpha-independent manner. The sequence is that of Glucocorticoid receptor (Nr3c1) from Mus musculus (Mouse).